The sequence spans 443 residues: Endonuclease CUE2 (443 aa).

2 CUE domains span residues 8–51 (DHES…KEND) and 55–98 (TVDN…NYET). One can recognise a Smr domain in the interval 347 to 443 (LDFHGFLPSE…YFRIEGKKKK (97 aa)).

MRNA endonuclease involved in the No-Go Decay (NGD) pathway, which catalyzes mRNA cleavage and degradation in response to ribosome collisions. Acts downstream of the ribosome collision sensor HEL2. Specifically recognizes and binds RPS7/eS7 polyubiquitinated by MOT2/NOT4 and HEL2, promoting CUE2 recruitment to stalled ribosomes, where it mediates mRNA cleavage upstream of the colliding ribosome. Also mediates mRNA cleavage within colliding ribosomes: recruited to colliding ribosomes downstream of the RQT (ribosome quality control trigger) complex following disassembly of stalled ribosomes and cleaves mRNAs partially released from the colliding ribosome. This Saccharomyces cerevisiae (strain ATCC 204508 / S288c) (Baker's yeast) protein is Endonuclease CUE2.